Here is a 181-residue protein sequence, read N- to C-terminus: Large ribosomal subunit protein uL6 (181 aa).

The protein belongs to the universal ribosomal protein uL6 family. Part of the 50S ribosomal subunit.

Its function is as follows. This protein binds to the 23S rRNA, and is important in its secondary structure. It is located near the subunit interface in the base of the L7/L12 stalk, and near the tRNA binding site of the peptidyltransferase center. This Coprothermobacter proteolyticus (strain ATCC 35245 / DSM 5265 / OCM 4 / BT) protein is Large ribosomal subunit protein uL6.